Reading from the N-terminus, the 98-residue chain is HssA/B-like protein 39 (98 aa).

Residues Met1 to Ile21 form a disordered region.

This sequence belongs to the hssA/B family.

The chain is HssA/B-like protein 39 (hssl39) from Dictyostelium discoideum (Social amoeba).